The chain runs to 420 residues: Serine--tRNA ligase (420 aa).

229–231 contributes to the L-serine binding site; sequence TAE. 260–262 serves as a coordination point for ATP; the sequence is RAE. Residue Glu283 coordinates L-serine. An ATP-binding site is contributed by 347 to 350; the sequence is EISS. Residue Ser382 coordinates L-serine.

This sequence belongs to the class-II aminoacyl-tRNA synthetase family. Type-1 seryl-tRNA synthetase subfamily. As to quaternary structure, homodimer. The tRNA molecule binds across the dimer.

Its subcellular location is the cytoplasm. The enzyme catalyses tRNA(Ser) + L-serine + ATP = L-seryl-tRNA(Ser) + AMP + diphosphate + H(+). It catalyses the reaction tRNA(Sec) + L-serine + ATP = L-seryl-tRNA(Sec) + AMP + diphosphate + H(+). It functions in the pathway aminoacyl-tRNA biosynthesis; selenocysteinyl-tRNA(Sec) biosynthesis; L-seryl-tRNA(Sec) from L-serine and tRNA(Sec): step 1/1. Catalyzes the attachment of serine to tRNA(Ser). Is also able to aminoacylate tRNA(Sec) with serine, to form the misacylated tRNA L-seryl-tRNA(Sec), which will be further converted into selenocysteinyl-tRNA(Sec). The protein is Serine--tRNA ligase of Caldicellulosiruptor bescii (strain ATCC BAA-1888 / DSM 6725 / KCTC 15123 / Z-1320) (Anaerocellum thermophilum).